Here is a 102-residue protein sequence, read N- to C-terminus: Small ribosomal subunit protein uS10 (102 aa).

It belongs to the universal ribosomal protein uS10 family. In terms of assembly, part of the 30S ribosomal subunit.

Its function is as follows. Involved in the binding of tRNA to the ribosomes. The sequence is that of Small ribosomal subunit protein uS10 from Nitrosopumilus maritimus (strain SCM1).